Consider the following 285-residue polypeptide: Protein phosphatase 1 regulatory subunit 3C (285 aa).

The PP1-binding motif signature appears at 72–75 (KVVF). A CBM21 domain is found at 133-241 (RKRLMKNSVC…NNNGKNYALV (109 aa)).

Interacts with PPP1CC catalytic subunit of PP1 and associates with glycogen. Forms complexes with glycogen phosphorylase, glycogen synthase and phosphorylase kinase which is necessary for its regulation of PP1 activity. Ubiquitously expressed in the examined tissues including brain, muscle, liver and spleen under normoxic condition. Its expression is higher in insulin sensitive tissues (liver and muscle) than in the brain and spleen. Significantly increased expression in the liver and muscle under short-term (1-12 hours) hypoxia exposure. Significantly increased expression after long-term (natural) hypoxia exposure in liver and spleen. No significant differences in expression in brain for any time periods.

In terms of biological role, acts as a glycogen-targeting subunit for PP1 and regulates its activity. Activates glycogen synthase, reduces glycogen phosphorylase activity and limits glycogen breakdown. The sequence is that of Protein phosphatase 1 regulatory subunit 3C from Clarias batrachus (Walking catfish).